We begin with the raw amino-acid sequence, 5104 residues long: Malformin synthetase mlfA (5104 aa).

The tract at residues 225 to 616 (ERHAVNRPHS…CGRADTQVKL (392 aa)) is adenylation 1. A Carrier 1 domain is found at 757-830 (SRLEQEIQLA…EAASLAEVQE (74 aa)). Position 791 is an O-(pantetheine 4'-phosphoryl)serine (serine 791). The interval 868–1299 (EDVFPCTTMQ…ALNTLSLLQA (432 aa)) is condensation 1. Positions 1327 to 1716 (DRWVTRQPEG…GRKDTQVKLR (390 aa)) are adenylation 2. One can recognise a Carrier 2 domain in the interval 1854-1931 (TPASELERTL…QLAAEFGGPA (78 aa)). Residue serine 1891 is modified to O-(pantetheine 4'-phosphoryl)serine. 2 disordered regions span residues 1928-1961 (GGPAGQSASSASSTTEERFTFSTPDDSSTNDGVD) and 1998-2025 (TNKTPSVSSSSSSSSSSEKKKKAAKVDS). Composition is skewed to low complexity over residues 1934-1958 (SASSASSTTEERFTFSTPDDSSTND) and 2003-2013 (SVSSSSSSSSS). Residues 2066–2481 (EDIYPATPLQ…TVSYSDKEAL (416 aa)) form a condensation 2 region. The interval 2504–2896 (VRTPHAPAVC…IGRRDGQLKL (393 aa)) is adenylation 3. A Carrier 3 domain is found at 3032–3108 (RPVTSQEREM…QLICHLNTIR (77 aa)). Serine 3069 carries the post-translational modification O-(pantetheine 4'-phosphoryl)serine. 2 condensation regions span residues 3125–3590 (WVAL…TYDQ) and 3611–4029 (NIYP…EQLV). The tract at residues 4054-4444 (HSSREAVCAW…VGRKDNQIKF (391 aa)) is adenylation 4. One can recognise a Carrier 4 domain in the interval 4578–4654 (MPSTAAERKM…DLSDQARSLI (77 aa)). Serine 4615 is modified (O-(pantetheine 4'-phosphoryl)serine). Residues 4691–5018 (DVLPTTSFQR…LQTIVQHQNN (328 aa)) are condensation 5.

Belongs to the NRP synthetase family.

It functions in the pathway secondary metabolite biosynthesis. Functionally, nonribosomal peptide synthetase; part of the gene cluster that mediates the biosynthesis of malformins, cyclic pentapeptides with a disulfide bond between 2 consecutive cysteins, that show potential anti-tumor as well as antimalarial and antitrypanosomal properties. The nonribosomal peptide synthetase mlfA is responsible of the formation of the cyclic pentapeptide. The malformin biosynthesis clusters in malformin-producing fungi also contain enzymes involved in the formation of the disulfide bond between the two consecutive cysteins within malformins, in addition to additional tailoring enzymes such as methyltransferases or oxidoreductases. They are also composed of up to 4 major facilitator superfamily transporters, and transcription factors probably involved in the regulation of the expression of those clusters. The polypeptide is Malformin synthetase mlfA (Aspergillus vadensis (strain CBS 113365 / IMI 142717 / IBT 24658)).